A 461-amino-acid chain; its full sequence is Ribulose bisphosphate carboxylase (461 aa).

A substrate-binding site is contributed by asparagine 112. The active-site Proton acceptor is lysine 167. A substrate-binding site is contributed by lysine 169. Mg(2+) contacts are provided by lysine 192, aspartate 194, and glutamate 195. The residue at position 192 (lysine 192) is an N6-carboxylysine. Histidine 288 (proton acceptor) is an active-site residue. Substrate is bound by residues arginine 289, histidine 322, and serine 369.

It belongs to the RuBisCO large chain family. Type II subfamily. As to quaternary structure, homodimer. Mg(2+) serves as cofactor.

The enzyme catalyses 2 (2R)-3-phosphoglycerate + 2 H(+) = D-ribulose 1,5-bisphosphate + CO2 + H2O. It catalyses the reaction D-ribulose 1,5-bisphosphate + O2 = 2-phosphoglycolate + (2R)-3-phosphoglycerate + 2 H(+). In terms of biological role, ruBisCO catalyzes two reactions: the carboxylation of D-ribulose 1,5-bisphosphate, the primary event in carbon dioxide fixation, as well as the oxidative fragmentation of the pentose substrate. Both reactions occur simultaneously and in competition at the same active site. The protein is Ribulose bisphosphate carboxylase of Rhodopseudomonas palustris (strain BisB18).